The sequence spans 269 residues: Subtilisin BL (269 aa).

Ca(2+) is bound at residue Gln2. The region spanning 5 to 268 (PWGISRVQAP…SGLVNAEAAT (264 aa)) is the Peptidase S8 domain. Catalysis depends on Asp32, which acts as the Charge relay system. Asp40 serves as a coordination point for Ca(2+). His62 serves as the catalytic Charge relay system. Leu73, Asn75, Ile77, Val79, Ala163, Tyr165, and Ala168 together coordinate Ca(2+). Ser215 functions as the Charge relay system in the catalytic mechanism.

It belongs to the peptidase S8 family. Ca(2+) serves as cofactor.

The protein resides in the secreted. The enzyme catalyses Hydrolysis of proteins with broad specificity for peptide bonds, and a preference for a large uncharged residue in P1. Hydrolyzes peptide amides.. In terms of biological role, subtilisin is an extracellular alkaline serine protease, it catalyzes the hydrolysis of proteins and peptide amides. This is Subtilisin BL from Lederbergia lenta (Bacillus lentus).